We begin with the raw amino-acid sequence, 902 residues long: Protein translocase subunit SecA (902 aa).

ATP is bound by residues Gln-89, 107–111, and Asp-502; that span reads GEGKT. Positions 884, 886, 895, and 896 each coordinate Zn(2+).

The protein belongs to the SecA family. As to quaternary structure, monomer and homodimer. Part of the essential Sec protein translocation apparatus which comprises SecA, SecYEG and auxiliary proteins SecDF-YajC and YidC. It depends on Zn(2+) as a cofactor.

It localises to the cell inner membrane. The protein localises to the cytoplasm. It catalyses the reaction ATP + H2O + cellular proteinSide 1 = ADP + phosphate + cellular proteinSide 2.. Its function is as follows. Part of the Sec protein translocase complex. Interacts with the SecYEG preprotein conducting channel. Has a central role in coupling the hydrolysis of ATP to the transfer of proteins into and across the cell membrane, serving both as a receptor for the preprotein-SecB complex and as an ATP-driven molecular motor driving the stepwise translocation of polypeptide chains across the membrane. In Agrobacterium fabrum (strain C58 / ATCC 33970) (Agrobacterium tumefaciens (strain C58)), this protein is Protein translocase subunit SecA.